The primary structure comprises 325 residues: Ribosomal RNA small subunit methyltransferase H (325 aa).

S-adenosyl-L-methionine contacts are provided by residues 38–40 (GGY), Asp-55, Phe-82, Asp-103, and Gln-110. Disordered regions lie at residues 256 to 275 (SGGD…AARA) and 281 to 307 (PARK…RSAV).

Belongs to the methyltransferase superfamily. RsmH family.

The protein localises to the cytoplasm. It carries out the reaction cytidine(1402) in 16S rRNA + S-adenosyl-L-methionine = N(4)-methylcytidine(1402) in 16S rRNA + S-adenosyl-L-homocysteine + H(+). Its function is as follows. Specifically methylates the N4 position of cytidine in position 1402 (C1402) of 16S rRNA. The sequence is that of Ribosomal RNA small subunit methyltransferase H from Sphingopyxis alaskensis (strain DSM 13593 / LMG 18877 / RB2256) (Sphingomonas alaskensis).